The sequence spans 343 residues: Coiled-coil domain-containing protein 97 (343 aa).

Met1 bears the N-acetylmethionine mark. The tract at residues 1 to 37 (MEAVATATAAKEPDKGCIEPGPGHWGELSRTPVPSKP) is disordered. Position 47 is a phosphothreonine (Thr47). Disordered regions lie at residues 200–220 (ARTPTHQPPKPGSPGRPACPL), 234–277 (QQRL…DSEE), and 292–343 (RFLD…LDGD). Residues 224–262 (LLQSYEERELQQRLLQQQEEEEACLEEEEEEEDSDEEDQ) adopt a coiled-coil conformation. A compositionally biased stretch (acidic residues) spans 241 to 261 (QEEEEACLEEEEEEEDSDEED). Residues 262–277 (QRSGKDSEAWVPDSEE) show a composition bias toward basic and acidic residues. 2 positions are modified to phosphoserine: Ser275 and Ser337. Residues 324 to 343 (ERYFDEEEPEDAPSPELDGD) show a composition bias toward acidic residues.

In terms of assembly, associates with splicing factor SF3B complex, involved in branch-site recognition.

It is found in the nucleus. Functionally, may play a role pre-mRNA splicing through the association with the splicing factor SF3B complex which is involved in branch-site recognition. The chain is Coiled-coil domain-containing protein 97 (CCDC97) from Homo sapiens (Human).